The primary structure comprises 173 residues: MEESFLESFGRLSLRQQQPPPPRPPAPPPLRGTPPRRHSFRKHLYLLRGLPGSGKTTLARQLQHDFPRALIFSTDDFFFREDGAYEFNPDFLEEAHEWNQKRARKAMRNGISPIIIDNTNLHAWEMKPYAVMVFQTEQKNLFRLEMDMVVFRPEMKKHSWSPKRENTPNERTV.

Positions 1–35 are disordered; the sequence is MEESFLESFGRLSLRQQQPPPPRPPAPPPLRGTPP. Residues 18-32 show a composition bias toward pro residues; it reads QPPPPRPPAPPPLRG.

In terms of assembly, interacts with dynactin subunit proteins, including DCTN4, DCTN5 and DCTN5.

In terms of biological role, might play a role in adipocyte differentiation and triglyceride accumulation. This chain is NEDD4-binding protein 2-like 1 (N4BP2L1), found in Bos taurus (Bovine).